Reading from the N-terminus, the 39-residue chain is Cytochrome b559 subunit beta (39 aa).

A helical membrane pass occupies residues 14 to 30; sequence WLAVHGLAIPTVSFLGS. Heme is bound at residue His-18.

This sequence belongs to the PsbE/PsbF family. In terms of assembly, heterodimer of an alpha subunit and a beta subunit. PSII is composed of 1 copy each of membrane proteins PsbA, PsbB, PsbC, PsbD, PsbE, PsbF, PsbH, PsbI, PsbJ, PsbK, PsbL, PsbM, PsbT, PsbX, PsbY, PsbZ, Psb30/Ycf12, at least 3 peripheral proteins of the oxygen-evolving complex and a large number of cofactors. It forms dimeric complexes. The cofactor is heme b.

It is found in the plastid. It localises to the chloroplast thylakoid membrane. This b-type cytochrome is tightly associated with the reaction center of photosystem II (PSII). PSII is a light-driven water:plastoquinone oxidoreductase that uses light energy to abstract electrons from H(2)O, generating O(2) and a proton gradient subsequently used for ATP formation. It consists of a core antenna complex that captures photons, and an electron transfer chain that converts photonic excitation into a charge separation. The polypeptide is Cytochrome b559 subunit beta (Beta vulgaris (Sugar beet)).